The chain runs to 226 residues: Respiratory nitrate reductase 2 gamma chain (226 aa).

The Periplasmic portion of the chain corresponds to 1–4; it reads MIQY. A helical transmembrane segment spans residues 5–30; the sequence is LNVFFYDIYPYICATVFFLGSWLRYD. Topologically, residues 31 to 48 are cytoplasmic; that stretch reads YGQYTWRASSSQMLDKRG. Residues 49-71 traverse the membrane as a helical segment; it reads MVIWSNLFHIGILGIFFGHLFGM. Heme b-binding residues include histidine 57 and histidine 67. The Periplasmic portion of the chain corresponds to 72 to 83; sequence LTPHWMYAWFLP. Residues 84–113 traverse the membrane as a helical segment; that stretch reads VAAKQLMAMVLGGICGVLTLIGGAGLLWRR. Topologically, residues 114-125 are cytoplasmic; it reads LTNQRVRATSTT. A helical membrane pass occupies residues 126 to 149; the sequence is PDIIIMSILLIQCLLGLSTIPFSA. Residues 150-183 lie on the Periplasmic side of the membrane; the sequence is QYPDGSEMMKLVGWAQSIVTFRGGSSEMLNGVAF. The chain crosses the membrane as a helical span at residues 184–199; it reads VFRLHLVLGMTIFLLF. 2 residues coordinate heme b: histidine 188 and histidine 206. Topologically, residues 200–226 are cytoplasmic; the sequence is PFTRLVHVWSAPFEYFTRRYQIVRSRR.

Dimer of heterotrimers each composed of an alpha, a beta and a gamma chain. Alpha and beta are catalytic chains; gamma chains are involved in binding the enzyme complex to the cytoplasmic membrane. The cofactor is heme.

Its subcellular location is the cell inner membrane. It carries out the reaction nitrate + a quinol = a quinone + nitrite + H2O. This is a second nitrate reductase enzyme which can substitute for the NRA enzyme and allows E.coli to use nitrate as an electron acceptor during anaerobic growth. The gamma chain is a membrane-embedded heme-iron unit resembling cytochrome b, which transfers electrons from quinones to the beta subunit. This chain is Respiratory nitrate reductase 2 gamma chain (narV), found in Escherichia coli (strain K12).